Here is a 390-residue protein sequence, read N- to C-terminus: Magnesium-protoporphyrin IX monomethyl ester [oxidative] cyclase (390 aa).

Belongs to the AcsF family. Requires Fe cation as cofactor.

It carries out the reaction Mg-protoporphyrin IX 13-monomethyl ester + 3 NADPH + 3 O2 + 2 H(+) = 3,8-divinyl protochlorophyllide a + 3 NADP(+) + 5 H2O. It functions in the pathway porphyrin-containing compound metabolism; chlorophyll biosynthesis (light-independent). In terms of biological role, catalyzes the formation of the isocyclic ring in chlorophyll biosynthesis. Mediates the cyclase reaction, which results in the formation of divinylprotochlorophyllide (Pchlide) characteristic of all chlorophylls from magnesium-protoporphyrin IX 13-monomethyl ester (MgPMME). The polypeptide is Magnesium-protoporphyrin IX monomethyl ester [oxidative] cyclase (Prochlorococcus marinus (strain MIT 9215)).